A 261-amino-acid polypeptide reads, in one-letter code: Thiamine thiazole synthase (261 aa).

NAD(+) is bound by residues S33, 52–53, G60, V124, and 152–154; these read ER and HVD. Positions 154 and 169 each coordinate Fe cation. An NAD(+)-binding site is contributed by M219. R229 contacts glycine.

It belongs to the THI4 family. As to quaternary structure, homooctamer; tetramer of dimers. It depends on Fe(2+) as a cofactor.

The catalysed reaction is hydrogen sulfide + glycine + NAD(+) = ADP-5-ethyl-4-methylthiazole-2-carboxylate + nicotinamide + 3 H2O + H(+). The protein operates within cofactor biosynthesis; thiamine diphosphate biosynthesis. Its function is as follows. Involved in the biosynthesis of the thiazole moiety of thiamine. Catalyzes the conversion of NAD and glycine to adenosine diphosphate 5-(2-hydroxyethyl)-4-methylthiazole-2-carboxylate (ADT), an adenylated thiazole intermediate, using free sulfide as a source of sulfur. In Pyrobaculum arsenaticum (strain DSM 13514 / JCM 11321 / PZ6), this protein is Thiamine thiazole synthase.